The primary structure comprises 555 residues: Oxygen-dependent choline dehydrogenase (555 aa).

4 to 33 (DYIIIGAGSAGNVLATRLTEDADVSVLLLE) lines the FAD pocket. Residues 180 to 202 (QQEGFGPMDRTVTPKGRRASTAR) are disordered. Histidine 473 acts as the Proton acceptor in catalysis.

It belongs to the GMC oxidoreductase family. It depends on FAD as a cofactor.

It catalyses the reaction choline + A = betaine aldehyde + AH2. The catalysed reaction is betaine aldehyde + NAD(+) + H2O = glycine betaine + NADH + 2 H(+). Its pathway is amine and polyamine biosynthesis; betaine biosynthesis via choline pathway; betaine aldehyde from choline (cytochrome c reductase route): step 1/1. Its function is as follows. Involved in the biosynthesis of the osmoprotectant glycine betaine. Catalyzes the oxidation of choline to betaine aldehyde and betaine aldehyde to glycine betaine at the same rate. The protein is Oxygen-dependent choline dehydrogenase of Serratia proteamaculans (strain 568).